We begin with the raw amino-acid sequence, 163 residues long: MGIFAEAETWVAVAFVILMALFAYLGVHRTVLQALDNRRARIKAELDEARKLKDEAAKLLADYRARRAQAEREAEAIISSAKADAERIAAESKAKLEDFVARRTKTAESKIALAEAQAVADVRAAAAEAAVSAAATILSQSVKGQVADDLLGKGIQEVRSKLN.

The chain crosses the membrane as a helical span at residues 7 to 27 (AETWVAVAFVILMALFAYLGV).

The protein belongs to the ATPase B chain family. In terms of assembly, F-type ATPases have 2 components, F(1) - the catalytic core - and F(0) - the membrane proton channel. F(1) has five subunits: alpha(3), beta(3), gamma(1), delta(1), epsilon(1). F(0) has three main subunits: a(1), b(2) and c(10-14). The alpha and beta chains form an alternating ring which encloses part of the gamma chain. F(1) is attached to F(0) by a central stalk formed by the gamma and epsilon chains, while a peripheral stalk is formed by the delta and b chains.

The protein localises to the cell inner membrane. F(1)F(0) ATP synthase produces ATP from ADP in the presence of a proton or sodium gradient. F-type ATPases consist of two structural domains, F(1) containing the extramembraneous catalytic core and F(0) containing the membrane proton channel, linked together by a central stalk and a peripheral stalk. During catalysis, ATP synthesis in the catalytic domain of F(1) is coupled via a rotary mechanism of the central stalk subunits to proton translocation. Its function is as follows. Component of the F(0) channel, it forms part of the peripheral stalk, linking F(1) to F(0). The polypeptide is ATP synthase subunit b 1 (Rhodopseudomonas palustris (strain BisB5)).